Here is a 293-residue protein sequence, read N- to C-terminus: ATP phosphoribosyltransferase (293 aa).

It belongs to the ATP phosphoribosyltransferase family. Long subfamily. Requires Mg(2+) as cofactor.

It is found in the cytoplasm. The catalysed reaction is 1-(5-phospho-beta-D-ribosyl)-ATP + diphosphate = 5-phospho-alpha-D-ribose 1-diphosphate + ATP. It functions in the pathway amino-acid biosynthesis; L-histidine biosynthesis; L-histidine from 5-phospho-alpha-D-ribose 1-diphosphate: step 1/9. With respect to regulation, feedback inhibited by histidine. Functionally, catalyzes the condensation of ATP and 5-phosphoribose 1-diphosphate to form N'-(5'-phosphoribosyl)-ATP (PR-ATP). Has a crucial role in the pathway because the rate of histidine biosynthesis seems to be controlled primarily by regulation of HisG enzymatic activity. This chain is ATP phosphoribosyltransferase, found in Nitratidesulfovibrio vulgaris (strain ATCC 29579 / DSM 644 / CCUG 34227 / NCIMB 8303 / VKM B-1760 / Hildenborough) (Desulfovibrio vulgaris).